We begin with the raw amino-acid sequence, 371 residues long: MSQDYYQILGVSKTASQADLKKAYLKLAKQYHPDTTDAKDAEKKFKEINSAYDVLKDEQKRAAYDRFGHDTFQYQQSRGGGGNHGGFHPDINDIFGDFFSDFMGGGRRKPTSSKARGSDLKYDLTINLEEAFHGIEKNISFSSEVKCDTCHGTGSEKGETVTTCDACGGVGATRIQQGFFTIEQACHKCQGNGQIIKNPCKKCHGMGRYHKQRNLSVNIPAGVENATRIRHPGEGEAGIRGGNSGDLYVDIAIKPHDIYKVDGANLHCKLPISFVNAALGGEIEVPIIEGGKVNLTIPAGTQNGDQLRLRSKGMSKMRSTIRGDMLTHIHVEVPKNLSKRQRELLEEFKKESINEKENDGSFFNKMKSLWS.

Positions 4-68 (DYYQILGVSK…QKRAAYDRFG (65 aa)) constitute a J domain. The CR-type zinc finger occupies 134–212 (GIEKNISFSS…CHGMGRYHKQ (79 aa)). The Zn(2+) site is built by Cys-147, Cys-150, Cys-164, Cys-167, Cys-186, Cys-189, Cys-200, and Cys-203. 4 CXXCXGXG motif repeats span residues 147–154 (CDTCHGTG), 164–171 (CDACGGVG), 186–193 (CHKCQGNG), and 200–207 (CKKCHGMG).

It belongs to the DnaJ family. As to quaternary structure, homodimer. It depends on Zn(2+) as a cofactor.

It localises to the cytoplasm. Participates actively in the response to hyperosmotic and heat shock by preventing the aggregation of stress-denatured proteins and by disaggregating proteins, also in an autonomous, DnaK-independent fashion. Unfolded proteins bind initially to DnaJ; upon interaction with the DnaJ-bound protein, DnaK hydrolyzes its bound ATP, resulting in the formation of a stable complex. GrpE releases ADP from DnaK; ATP binding to DnaK triggers the release of the substrate protein, thus completing the reaction cycle. Several rounds of ATP-dependent interactions between DnaJ, DnaK and GrpE are required for fully efficient folding. Also involved, together with DnaK and GrpE, in the DNA replication of plasmids through activation of initiation proteins. This chain is Chaperone protein DnaJ, found in Rickettsia felis (strain ATCC VR-1525 / URRWXCal2) (Rickettsia azadi).